Reading from the N-terminus, the 228-residue chain is Urease accessory protein UreF (228 aa).

The protein belongs to the UreF family. In terms of assembly, ureD, UreF and UreG form a complex that acts as a GTP-hydrolysis-dependent molecular chaperone, activating the urease apoprotein by helping to assemble the nickel containing metallocenter of UreC. The UreE protein probably delivers the nickel.

The protein resides in the cytoplasm. Its function is as follows. Required for maturation of urease via the functional incorporation of the urease nickel metallocenter. This chain is Urease accessory protein UreF, found in Prochlorococcus marinus (strain MIT 9301).